The chain runs to 934 residues: Bifunctional uridylyltransferase/uridylyl-removing enzyme (934 aa).

Residues M1 to S379 form a uridylyltransferase region. Residues D380–T736 form a uridylyl-removing region. The region spanning V496–M613 is the HD domain. ACT domains are found at residues E737–A818 and V848–Q931.

It belongs to the GlnD family. The cofactor is Mg(2+).

The enzyme catalyses [protein-PII]-L-tyrosine + UTP = [protein-PII]-uridylyl-L-tyrosine + diphosphate. It catalyses the reaction [protein-PII]-uridylyl-L-tyrosine + H2O = [protein-PII]-L-tyrosine + UMP + H(+). With respect to regulation, uridylyltransferase (UTase) activity is inhibited by glutamine, while glutamine activates uridylyl-removing (UR) activity. Its function is as follows. Modifies, by uridylylation and deuridylylation, the PII regulatory proteins (GlnB and homologs), in response to the nitrogen status of the cell that GlnD senses through the glutamine level. Under low glutamine levels, catalyzes the conversion of the PII proteins and UTP to PII-UMP and PPi, while under higher glutamine levels, GlnD hydrolyzes PII-UMP to PII and UMP (deuridylylation). Thus, controls uridylylation state and activity of the PII proteins, and plays an important role in the regulation of nitrogen assimilation and metabolism. The chain is Bifunctional uridylyltransferase/uridylyl-removing enzyme from Brucella ovis (strain ATCC 25840 / 63/290 / NCTC 10512).